The following is a 288-amino-acid chain: 30 kDa spicule matrix protein (288 aa).

Residues 1 to 20 (MRCFVYVLVCVVASVSYSRA) form the signal peptide. The 71-residue stretch at 93-163 (ANMYCGQMHP…YTNWEGMVAP (71 aa)) folds into the C-type lectin domain. Asparagine 103 carries N-linked (GlcNAc...) asparagine glycosylation.

As to expression, spines and tube feet.

Matrix protein of the sea urchin embryo spicule. The function of the matrix proteins is to direct crystal growth in certain orientations and inhibit growth in others. The chain is 30 kDa spicule matrix protein (SM30) from Hemicentrotus pulcherrimus (Sea urchin).